Reading from the N-terminus, the 201-residue chain is Recombination protein RecR (201 aa).

The segment at 57–72 adopts a C4-type zinc-finger fold; it reads CKSCRTFTEEDECAIC. A Toprim domain is found at 81–176; the sequence is GQLCVVEMPA…KVTRIAHGIP (96 aa).

This sequence belongs to the RecR family.

In terms of biological role, may play a role in DNA repair. It seems to be involved in an RecBC-independent recombinational process of DNA repair. It may act with RecF and RecO. This is Recombination protein RecR from Glaesserella parasuis serovar 5 (strain SH0165) (Haemophilus parasuis).